Here is a 1596-residue protein sequence, read N- to C-terminus: A-kinase anchor protein SPHKAP (1596 aa).

Disordered regions lie at residues 214-233 (KHGR…RSVS), 242-319 (ASEQ…TPKQ), 389-432 (DNSE…GHPA), 462-481 (SGEE…DQGE), and 760-809 (EQSD…SSSS). Positions 292 to 306 (TLCTSSNSQKLSRTY) are enriched in polar residues. The segment covering 462-479 (SGEEYECEDEEEESETDQ) has biased composition (acidic residues). Positions 829–846 (FAEDLATTVVSMATELAA) are PKA-RII subunit binding domain. 3 disordered regions span residues 958-1022 (VVDT…ISKQ), 1282-1310 (VGER…ENSC), and 1328-1443 (VPLI…SSLG). Polar residues predominate over residues 959-971 (VDTSKSGQSSRSR). Basic and acidic residues predominate over residues 1333 to 1356 (IEPDQREEASEEKGGVETHHREAS). Residues 1357 to 1372 (HQTQQQSGKGSETATK) are compositionally biased toward polar residues. Composition is skewed to low complexity over residues 1398 to 1409 (LSASSEESGSGS) and 1430 to 1443 (LSEG…SSLG).

Belongs to the AKAP110 family.

It is found in the cytoplasm. Functionally, anchoring protein that mediates the subcellular compartmentation of cAMP-dependent protein kinase (PKA type II). This chain is A-kinase anchor protein SPHKAP (sphkap), found in Danio rerio (Zebrafish).